The following is a 455-amino-acid chain: tRNA modification GTPase MnmE (455 aa).

(6S)-5-formyl-5,6,7,8-tetrahydrofolate contacts are provided by R24, E81, and K120. The TrmE-type G domain maps to 216–378 (GMTVVIAGRP…LREHLKACMG (163 aa)). K(+) is bound at residue N226. Residues 226–231 (NAGKSS), 245–251 (TDIAGTT), 270–273 (DTAG), 335–338 (NKAD), and 359–361 (SAR) contribute to the GTP site. Residue S230 participates in Mg(2+) binding. K(+) is bound by residues T245, I247, and T250. T251 contributes to the Mg(2+) binding site. K455 is a (6S)-5-formyl-5,6,7,8-tetrahydrofolate binding site.

Belongs to the TRAFAC class TrmE-Era-EngA-EngB-Septin-like GTPase superfamily. TrmE GTPase family. As to quaternary structure, homodimer. Heterotetramer of two MnmE and two MnmG subunits. Requires K(+) as cofactor.

The protein localises to the cytoplasm. Exhibits a very high intrinsic GTPase hydrolysis rate. Involved in the addition of a carboxymethylaminomethyl (cmnm) group at the wobble position (U34) of certain tRNAs, forming tRNA-cmnm(5)s(2)U34. This Pseudomonas aeruginosa (strain ATCC 15692 / DSM 22644 / CIP 104116 / JCM 14847 / LMG 12228 / 1C / PRS 101 / PAO1) protein is tRNA modification GTPase MnmE.